Consider the following 366-residue polypeptide: MNKVVLLCRPGFEKECAAEITDKAGKREIFGFARVKENAGYVIYECYQPEDGEKLISELPFSSLIFARQWFVVGELLQHLPPEDRITPIVGMLQGVVEKGGELRVEVADTNESKELMKFCRKFTVPLRAALRDVGVLTNYETPKRPVVHVFFIAPGCCYTGYSFAHNNSPFYMGIPRLKFPSDAPSRSTLKLEEALHVFIPEDEWDERLANGMYAVDLGACPGGWTYQLVKRNMWVYSVDNGPMAQSLMDTGQVTWLREDGFRYRPNRNNISWMVCDMVEKPAKVTALMAQWLVNGWCRETIFNLKLPMKKRYEEVSHNLAYLQAQLDEHGVNAQIQARQLYHDREEVTVHVRRLWAAVGGRRDER.

S-adenosyl-L-methionine is bound by residues Ser-188, 221–224 (CPGG), Asp-240, Asp-260, and Asp-277. Lys-306 serves as the catalytic Proton acceptor.

It belongs to the class I-like SAM-binding methyltransferase superfamily. RNA methyltransferase RlmE family. RlmM subfamily. Monomer.

It is found in the cytoplasm. It catalyses the reaction cytidine(2498) in 23S rRNA + S-adenosyl-L-methionine = 2'-O-methylcytidine(2498) in 23S rRNA + S-adenosyl-L-homocysteine + H(+). Its function is as follows. Catalyzes the 2'-O-methylation at nucleotide C2498 in 23S rRNA. This is Ribosomal RNA large subunit methyltransferase M from Salmonella paratyphi C (strain RKS4594).